A 171-amino-acid polypeptide reads, in one-letter code: 3-hydroxydecanoyl-[acyl-carrier-protein] dehydratase (171 aa).

Residue His70 is part of the active site.

The protein belongs to the thioester dehydratase family. FabA subfamily. Homodimer.

The protein localises to the cytoplasm. The enzyme catalyses a (3R)-hydroxyacyl-[ACP] = a (2E)-enoyl-[ACP] + H2O. It carries out the reaction (3R)-hydroxydecanoyl-[ACP] = (2E)-decenoyl-[ACP] + H2O. It catalyses the reaction (2E)-decenoyl-[ACP] = (3Z)-decenoyl-[ACP]. It functions in the pathway lipid metabolism; fatty acid biosynthesis. Its function is as follows. Necessary for the introduction of cis unsaturation into fatty acids. Catalyzes the dehydration of (3R)-3-hydroxydecanoyl-ACP to E-(2)-decenoyl-ACP and then its isomerization to Z-(3)-decenoyl-ACP. Can catalyze the dehydratase reaction for beta-hydroxyacyl-ACPs with saturated chain lengths up to 16:0, being most active on intermediate chain length. This is 3-hydroxydecanoyl-[acyl-carrier-protein] dehydratase from Shewanella sp. (strain MR-4).